Consider the following 246-residue polypeptide: Protein DEHYDRATION-INDUCED 19 homolog 3 (246 aa).

Residues 185–230 are disordered; sequence ERSKAPVPIPDDTSIHKDTPAQPWESRIDSSLTSEEREQKRKQATD. The segment covering 218-229 has biased composition (basic and acidic residues); sequence SEEREQKRKQAT.

This sequence belongs to the Di19 family.

The polypeptide is Protein DEHYDRATION-INDUCED 19 homolog 3 (DI19-3) (Oryza sativa subsp. japonica (Rice)).